Consider the following 179-residue polypeptide: Ribosome maturation factor RimM (179 aa).

Residues 96-179 (DNEFYWVDLI…KITVDWGLDY (84 aa)) form the PRC barrel domain.

This sequence belongs to the RimM family. As to quaternary structure, binds ribosomal protein uS19.

It is found in the cytoplasm. Its function is as follows. An accessory protein needed during the final step in the assembly of 30S ribosomal subunit, possibly for assembly of the head region. Essential for efficient processing of 16S rRNA. May be needed both before and after RbfA during the maturation of 16S rRNA. It has affinity for free ribosomal 30S subunits but not for 70S ribosomes. The sequence is that of Ribosome maturation factor RimM from Janthinobacterium sp. (strain Marseille) (Minibacterium massiliensis).